The primary structure comprises 101 residues: Small ribosomal subunit protein uS14 (101 aa).

Residues 1 to 23 (MAKKSSVEKNKRRRKMVAQQAPK) are disordered.

The protein belongs to the universal ribosomal protein uS14 family. As to quaternary structure, part of the 30S ribosomal subunit. Contacts proteins S3 and S10.

Its function is as follows. Binds 16S rRNA, required for the assembly of 30S particles and may also be responsible for determining the conformation of the 16S rRNA at the A site. The protein is Small ribosomal subunit protein uS14 of Rhodospirillum centenum (strain ATCC 51521 / SW).